The chain runs to 491 residues: UDP-N-acetylmuramate--L-alanine ligase (491 aa).

126–132 (GTHGKTT) lines the ATP pocket.

The protein belongs to the MurCDEF family.

It is found in the cytoplasm. It carries out the reaction UDP-N-acetyl-alpha-D-muramate + L-alanine + ATP = UDP-N-acetyl-alpha-D-muramoyl-L-alanine + ADP + phosphate + H(+). The protein operates within cell wall biogenesis; peptidoglycan biosynthesis. Cell wall formation. This Yersinia enterocolitica serotype O:8 / biotype 1B (strain NCTC 13174 / 8081) protein is UDP-N-acetylmuramate--L-alanine ligase.